A 344-amino-acid polypeptide reads, in one-letter code: Tetraacyldisaccharide 4'-kinase (344 aa).

65-72 (HAGGTGKT) provides a ligand contact to ATP.

Belongs to the LpxK family.

It catalyses the reaction a lipid A disaccharide + ATP = a lipid IVA + ADP + H(+). It functions in the pathway glycolipid biosynthesis; lipid IV(A) biosynthesis; lipid IV(A) from (3R)-3-hydroxytetradecanoyl-[acyl-carrier-protein] and UDP-N-acetyl-alpha-D-glucosamine: step 6/6. In terms of biological role, transfers the gamma-phosphate of ATP to the 4'-position of a tetraacyldisaccharide 1-phosphate intermediate (termed DS-1-P) to form tetraacyldisaccharide 1,4'-bis-phosphate (lipid IVA). The chain is Tetraacyldisaccharide 4'-kinase from Neisseria meningitidis serogroup A / serotype 4A (strain DSM 15465 / Z2491).